Reading from the N-terminus, the 451-residue chain is Chromosomal replication initiator protein DnaA (451 aa).

The interval 1–71 is domain I, interacts with DnaA modulators; that stretch reads MSEKEIWDKV…QAIIYDVIGY (71 aa). The tract at residues 71–112 is domain II; the sequence is YEVKPHFISEDELASYNNVNTQEVQEPQVQHSSIDDKTWGKE. Residues 113 to 329 form a domain III, AAA+ region region; sequence QFNMHNTFDT…GALTRLLAYS (217 aa). ATP is bound by residues glycine 157, glycine 159, lysine 160, and threonine 161. Positions 330-451 are domain IV, binds dsDNA; sequence KLQGKPITTE…ENLEKEIRNQ (122 aa).

It belongs to the DnaA family. Oligomerizes as a right-handed, spiral filament on DNA at oriC.

Its subcellular location is the cytoplasm. Functionally, plays an essential role in the initiation and regulation of chromosomal replication. ATP-DnaA binds to the origin of replication (oriC) to initiate formation of the DNA replication initiation complex once per cell cycle. Binds the DnaA box (a 9 base pair repeat at the origin) and separates the double-stranded (ds)DNA. Forms a right-handed helical filament on oriC DNA; dsDNA binds to the exterior of the filament while single-stranded (ss)DNA is stabiized in the filament's interior. The ATP-DnaA-oriC complex binds and stabilizes one strand of the AT-rich DNA unwinding element (DUE), permitting loading of DNA polymerase. After initiation quickly degrades to an ADP-DnaA complex that is not apt for DNA replication. Binds acidic phospholipids. The chain is Chromosomal replication initiator protein DnaA from Staphylococcus epidermidis (strain ATCC 12228 / FDA PCI 1200).